Consider the following 142-residue polypeptide: Augurin-A (142 aa).

The signal sequence occupies residues 1 to 28 (MLSEKFHLRLLTLLTLLTALSLTDVASE). Propeptides lie at residues 29–66 (SKLEKLLMKRVDRDVKPAAAVAVSPSKAKEFLTSLKRP) and 127–142 (GAASYRHGANVNYDYY).

The protein belongs to the augurin family.

The protein localises to the secreted. It is found in the cytoplasm. The protein resides in the apical cell membrane. In terms of biological role, probable hormone. Required for the proper formation of the central nervous system by attenuating cell proliferation during development. This chain is Augurin-A, found in Danio rerio (Zebrafish).